A 279-amino-acid polypeptide reads, in one-letter code: Shikimate dehydrogenase (NADP(+)) (279 aa).

Shikimate-binding positions include 20–22 and Thr67; that span reads SRS. Lys71 functions as the Proton acceptor in the catalytic mechanism. Residue Asp83 participates in NADP(+) binding. Shikimate contacts are provided by Asn92 and Asp108. NADP(+) is bound by residues 134–138 and Leu223; that span reads GAGGA. Tyr225 lines the shikimate pocket. Gly246 lines the NADP(+) pocket.

It belongs to the shikimate dehydrogenase family. Homodimer.

The catalysed reaction is shikimate + NADP(+) = 3-dehydroshikimate + NADPH + H(+). It functions in the pathway metabolic intermediate biosynthesis; chorismate biosynthesis; chorismate from D-erythrose 4-phosphate and phosphoenolpyruvate: step 4/7. Functionally, involved in the biosynthesis of the chorismate, which leads to the biosynthesis of aromatic amino acids. Catalyzes the reversible NADPH linked reduction of 3-dehydroshikimate (DHSA) to yield shikimate (SA). This is Shikimate dehydrogenase (NADP(+)) from Cereibacter sphaeroides (strain ATCC 17025 / ATH 2.4.3) (Rhodobacter sphaeroides).